Consider the following 316-residue polypeptide: Aprataxin (316 aa).

The FHA-like domain maps to 1-38 (HASARGEGFLLLKADCNKGYVTVKQIGVNPTSVDLVDV). The disordered stretch occupies residues 104–142 (KKMEVVDTQSSSADLRPSKSSVSPHEGTTSRKEHLGHWS). Residues 110 to 130 (DTQSSSADLRPSKSSVSPHEG) show a composition bias toward polar residues. The 106-residue stretch at 142-247 (SQGLKSSMQD…ISQDFDSPAL (106 aa)) folds into the HIT domain. Interaction with DNA substrate stretches follow at residues 167 to 171 (DKYPK) and 229 to 230 (SM). The Histidine triad motif signature appears at 232–236 (QLHLH). His234 acts as the Tele-AMP-histidine intermediate in catalysis. The segment at 291-313 (LRCHLCKQQLSTIPQLKEHLKKH) adopts a C2H2-type zinc-finger fold.

The protein resides in the nucleus. It is found in the nucleoplasm. The protein localises to the nucleolus. The enzyme catalyses a 5'-end adenosine-5'-diphospho-5'-2'-deoxyribonucleoside-DNA + H2O = a 5'-end 5'-phospho-2'-deoxyribonucleoside-DNA + AMP + 2 H(+). It catalyses the reaction a 5'-end adenosine-5'-diphospho-5'-ribonucleoside-2'-deoxyribonucleotide-DNA + H2O = a 5'-end 5'-phospho-ribonucleoside-2'-deoxyribonucleotide-DNA + AMP + 2 H(+). The catalysed reaction is a 3'-end 2'-deoxyribonucleotide-3'-diphospho-5'-guanosine-DNA + H2O = a 3'-end 2'-deoxyribonucleotide 3'-phosphate-DNA + GMP + 2 H(+). Its function is as follows. DNA-binding protein involved in single-strand DNA break repair, double-strand DNA break repair and base excision repair. Resolves abortive DNA ligation intermediates formed either at base excision sites, or when DNA ligases attempt to repair non-ligatable breaks induced by reactive oxygen species. Catalyzes the release of adenylate groups covalently linked to 5'-phosphate termini, resulting in the production of 5'-phosphate termini that can be efficiently rejoined. Also able to hydrolyze adenosine 5'-monophosphoramidate (AMP-NH(2)) and diadenosine tetraphosphate (AppppA), but with lower catalytic activity. Likewise, catalyzes the release of 3'-linked guanosine (DNAppG) and inosine (DNAppI) from DNA, but has higher specific activity with 5'-linked adenosine (AppDNA). This is Aprataxin (APTX) from Gallus gallus (Chicken).